The following is a 357-amino-acid chain: bZIP transcription factor 23 (357 aa).

Residues 166-185 are disordered; sequence PPVPPAPTPTAAAVPPPPPP. A bZIP domain is found at 275 to 338; it reads VERRQRRMIK…KNEVLERMSR (64 aa). Residues 277 to 296 form a basic motif region; that stretch reads RRQRRMIKNRESAARSRQRK. A leucine-zipper region spans residues 303–317; it reads LEAEVAKLKELNDEL.

The protein belongs to the bZIP family. ABI5 subfamily. Highly expressed in leaves.

Its subcellular location is the nucleus. Its function is as follows. Transcriptional activator that mediates abscisic acid (ABA) signaling. Can regulate the expression of a wide spectrum of stress-related genes in response to abiotic stresses through an ABA-dependent regulation pathway. Confers ABA-dependent drought and salinity tolerance. Binds specifically to the ABA-responsive elements (ABRE) in the promoter of target genes to mediate stress-responsive ABA signaling. In Oryza sativa subsp. japonica (Rice), this protein is bZIP transcription factor 23.